The primary structure comprises 564 residues: Aspyridones efflux protein (564 aa).

The span at 1–17 shows a compositional bias: low complexity; sequence MHPDQADTAAMQQQTTT. The disordered stretch occupies residues 1–49; the sequence is MHPDQADTAAMQQQTTTECSDRSRPEKAEEGHAREHTVTRTCSREPEQT. A compositionally biased stretch (basic and acidic residues) spans 19-47; the sequence is CSDRSRPEKAEEGHAREHTVTRTCSREPE. 10 helical membrane-spanning segments follow: residues 66–86, 127–147, 158–178, 185–205, 216–236, 260–280, 287–307, 335–355, 368–388, and 392–412; these read AICLTIFLISVDFSILATAIP, WTFLLALLTFEVGSIICATAP, IAGCGNAGLLSGALLILTHSV, LFMAMTGGTYGVAAIAGPPLG, WCFWINLPIGALTFLVIVFLF, VGTLMFMPAIICVLLALQWGG, SGIVVALLVVGGVLVIAFGIV, FALGAAFFVFIYFLPIWFQGV, LPMLVGNIVATAVSGVLVTII, and APFMILGTILASVGAGLLLLF. Residue asparagine 415 is glycosylated (N-linked (GlcNAc...) asparagine). The next 2 membrane-spanning stretches (helical) occupy residues 416–436 and 454–474; these read VTAASWIGYQAIVGLGIGFGW and IATATLSFAQTLGGTLFVSVA. A glycan (N-linked (GlcNAc...) asparagine) is linked at asparagine 524. The helical transmembrane segment at 528-548 threads the bilayer; sequence LSAFFVATIMAIMSLVGCTFV.

The protein belongs to the major facilitator superfamily. TCR/Tet family.

It is found in the cell membrane. Efflux pump that may be involved in the secretion of leporins. The polypeptide is Aspyridones efflux protein (TP) (Neocamarosporium betae (Beet black rot fungus)).